Consider the following 398-residue polypeptide: Cysteine protease ATG4A (398 aa).

Catalysis depends on C77, which acts as the Nucleophile. Active-site residues include D279 and H281. The LIR motif lies at F393–L396.

It belongs to the peptidase C54 family. In terms of assembly, interacts with ATG9A; the interaction is direct.

The protein resides in the cytoplasm. The enzyme catalyses [protein]-C-terminal L-amino acid-glycyl-phosphatidylethanolamide + H2O = [protein]-C-terminal L-amino acid-glycine + a 1,2-diacyl-sn-glycero-3-phosphoethanolamine. Its activity is regulated as follows. Inhibited by N-ethylmaleimide. Redox-regulated during autophagy since reducing conditions activate ATG4A whereas an oxidizing environment such as the presence of H(2)O(2) inhibits its activity. Cysteine protease that plays a key role in autophagy by mediating both proteolytic activation and delipidation of ATG8 family proteins. The protease activity is required for proteolytic activation of ATG8 family proteins: cleaves the C-terminal amino acid of ATG8 proteins to reveal a C-terminal glycine. Exposure of the glycine at the C-terminus is essential for ATG8 proteins conjugation to phosphatidylethanolamine (PE) and insertion to membranes, which is necessary for autophagy. Preferred substrate is GABARAPL2 followed by MAP1LC3A and GABARAP. Protease activity is also required to counteract formation of high-molecular weight conjugates of ATG8 proteins (ATG8ylation): acts as a deubiquitinating-like enzyme that removes ATG8 conjugated to other proteins, such as ATG3. In addition to the protease activity, also mediates delipidation of ATG8 family proteins. Catalyzes delipidation of PE-conjugated forms of ATG8 proteins during macroautophagy. Compared to ATG4B, the major protein for proteolytic activation of ATG8 proteins, shows weaker ability to cleave the C-terminal amino acid of ATG8 proteins, while it displays stronger delipidation activity. Involved in phagophore growth during mitophagy independently of its protease activity and of ATG8 proteins: acts by regulating ATG9A trafficking to mitochondria and promoting phagophore-endoplasmic reticulum contacts during the lipid transfer phase of mitophagy. The protein is Cysteine protease ATG4A of Homo sapiens (Human).